The chain runs to 311 residues: Malate dehydrogenase (311 aa).

Residues 7-13 (GAAGGIG) and aspartate 34 contribute to the NAD(+) site. The substrate site is built by arginine 81 and arginine 87. NAD(+) is bound by residues asparagine 94 and 117 to 119 (ITN). Substrate is bound by residues asparagine 119 and arginine 153. Histidine 177 acts as the Proton acceptor in catalysis. Methionine 227 is an NAD(+) binding site.

It belongs to the LDH/MDH superfamily. MDH type 1 family. As to quaternary structure, homodimer.

The enzyme catalyses (S)-malate + NAD(+) = oxaloacetate + NADH + H(+). Functionally, catalyzes the reversible oxidation of malate to oxaloacetate. This chain is Malate dehydrogenase, found in Aliivibrio salmonicida (strain LFI1238) (Vibrio salmonicida (strain LFI1238)).